Here is a 112-residue protein sequence, read N- to C-terminus: Small ribosomal subunit protein uS11c (112 aa).

The protein belongs to the universal ribosomal protein uS11 family. As to quaternary structure, part of the 30S ribosomal subunit.

The protein localises to the plastid. The chain is Small ribosomal subunit protein uS11c from Euglena longa (Euglenophycean alga).